The sequence spans 122 residues: Large ribosomal subunit protein uL14c (122 aa).

Belongs to the universal ribosomal protein uL14 family. Part of the 50S ribosomal subunit.

The protein resides in the plastid. It localises to the chloroplast. Binds to 23S rRNA. This is Large ribosomal subunit protein uL14c from Pyropia yezoensis (Susabi-nori).